The primary structure comprises 163 residues: Urease accessory protein UreE (163 aa).

A disordered region spans residues 144–163 (QPEPGAYGGSSAGSHDGHHH).

Belongs to the UreE family.

Its subcellular location is the cytoplasm. Functionally, involved in urease metallocenter assembly. Binds nickel. Probably functions as a nickel donor during metallocenter assembly. The chain is Urease accessory protein UreE from Aliivibrio fischeri (strain ATCC 700601 / ES114) (Vibrio fischeri).